Reading from the N-terminus, the 159-residue chain is Small ribosomal subunit protein uS4 (159 aa).

In terms of domain architecture, S4 RNA-binding spans 106–158 (RRLQTIVYRMGLAKSIYHARQLIVHGHIAIEGRRVTSPGFLVPRELEDKITLV).

The protein belongs to the universal ribosomal protein uS4 family. Part of the 30S ribosomal subunit. Contacts protein S5. The interaction surface between S4 and S5 is involved in control of translational fidelity.

Functionally, one of the primary rRNA binding proteins, it binds directly to 16S rRNA where it nucleates assembly of the body of the 30S subunit. Its function is as follows. With S5 and S12 plays an important role in translational accuracy. This is Small ribosomal subunit protein uS4 from Pyrobaculum arsenaticum (strain DSM 13514 / JCM 11321 / PZ6).